The following is a 489-amino-acid chain: Cytochrome P450 2C70 (489 aa).

An N-terminal signal peptide occupies residues 1 to 27; the sequence is MALFIFLGIWLSCFLFLFLWNQHRGRG. C434 contributes to the heme binding site.

Belongs to the cytochrome P450 family. Heme serves as cofactor. Expressed in liver.

Its subcellular location is the endoplasmic reticulum membrane. The protein localises to the microsome membrane. It catalyses the reaction chenodeoxycholate + reduced [NADPH--hemoprotein reductase] + O2 = alpha-muricholate + oxidized [NADPH--hemoprotein reductase] + H2O + H(+). The catalysed reaction is ursodeoxycholate + reduced [NADPH--hemoprotein reductase] + O2 = beta-muricholate + oxidized [NADPH--hemoprotein reductase] + H2O + H(+). Its function is as follows. A cytochrome P450 monooxygenase involved in muricholic acid (MCA) synthesis. Hydroxylates at the 6-beta position two major bile acids, chenodeoxycholic acid (CDCA) and ursodeoxycholic acid (UDCA) to form alpha-MCA and beta-MCA, respectively. May regulate NR1H4/farnesoid X receptor signaling, as taurine-conjugated MCAs are antagonists of NR1H4. Mechanistically, uses molecular oxygen inserting one oxygen atom into a substrate, and reducing the second into a water molecule, with two electrons provided by NADPH via cytochrome P450 reductase (CPR; NADPH-ferrihemoprotein reductase). In Mus musculus (Mouse), this protein is Cytochrome P450 2C70.